Here is an 867-residue protein sequence, read N- to C-terminus: KH domain-containing protein akap-1 (867 aa).

A helical transmembrane segment spans residues 108–128 (HALLIALGGFSIAALFVWYIN). Disordered stretches follow at residues 145–458 (SNGL…QKRV) and 481–523 (HENA…GLTT). Residues 152-162 (ATASDVQTENG) are compositionally biased toward polar residues. 4 stretches are compositionally biased toward basic and acidic residues: residues 186 to 211 (QQKDEDEKTQKKDAVQNEKPSIDKKQ), 218 to 239 (TEKKEEKTVEIHTETEETDHVA), 247 to 275 (SEHKEHDKKTKQKNDEPVSIDKKSEEIEV), and 298 to 307 (QFVKKEEPKL). Residues 336 to 345 (TKMNDATSPL) show a composition bias toward polar residues. Residues 363 to 383 (EMEKSFNEEEFRLNESSDIDR) are compositionally biased toward basic and acidic residues. A compositionally biased stretch (basic residues) spans 397–408 (NKNRSSQKRKGG). Basic and acidic residues-rich tracts occupy residues 441–458 (LTKEKSVEETPEKSQKRV) and 481–490 (HENASYEKSD). Residues 494-507 (LDSQNSEASSQDSG) are compositionally biased toward polar residues. In terms of domain architecture, KH spans 528–595 (LPMYEFEIPN…DEINHCLQML (68 aa)). A Tudor domain is found at 689-747 (PCQNGLLCAAPVGNAWFRAVTVQYFDETDEVFVKFVDYGGYSKMARQDLRQIRTDLMSL).

The protein resides in the membrane. The protein is KH domain-containing protein akap-1 of Caenorhabditis elegans.